We begin with the raw amino-acid sequence, 347 residues long: Holliday junction branch migration complex subunit RuvB (347 aa).

The tract at residues 1–186 is large ATPase domain (RuvB-L); that stretch reads MKDENSINFL…FGITARFELY (186 aa). Residues leucine 25, arginine 26, glycine 67, lysine 70, threonine 71, threonine 72, 133 to 135, arginine 176, tyrosine 186, and arginine 223 each bind ATP; that span reads EDY. Threonine 71 is a binding site for Mg(2+). The tract at residues 187–257 is small ATPAse domain (RuvB-S); it reads SEIELVEIIK…IVAIGLEMLR (71 aa). The tract at residues 260-347 is head domain (RuvB-H); sequence GEGLDEQDRN…NLNENQRVSF (88 aa). The DNA site is built by arginine 315 and arginine 320.

The protein belongs to the RuvB family. As to quaternary structure, homohexamer. Forms an RuvA(8)-RuvB(12)-Holliday junction (HJ) complex. HJ DNA is sandwiched between 2 RuvA tetramers; dsDNA enters through RuvA and exits via RuvB. An RuvB hexamer assembles on each DNA strand where it exits the tetramer. Each RuvB hexamer is contacted by two RuvA subunits (via domain III) on 2 adjacent RuvB subunits; this complex drives branch migration. In the full resolvosome a probable DNA-RuvA(4)-RuvB(12)-RuvC(2) complex forms which resolves the HJ.

The protein localises to the cytoplasm. It carries out the reaction ATP + H2O = ADP + phosphate + H(+). The RuvA-RuvB-RuvC complex processes Holliday junction (HJ) DNA during genetic recombination and DNA repair, while the RuvA-RuvB complex plays an important role in the rescue of blocked DNA replication forks via replication fork reversal (RFR). RuvA specifically binds to HJ cruciform DNA, conferring on it an open structure. The RuvB hexamer acts as an ATP-dependent pump, pulling dsDNA into and through the RuvAB complex. RuvB forms 2 homohexamers on either side of HJ DNA bound by 1 or 2 RuvA tetramers; 4 subunits per hexamer contact DNA at a time. Coordinated motions by a converter formed by DNA-disengaged RuvB subunits stimulates ATP hydrolysis and nucleotide exchange. Immobilization of the converter enables RuvB to convert the ATP-contained energy into a lever motion, pulling 2 nucleotides of DNA out of the RuvA tetramer per ATP hydrolyzed, thus driving DNA branch migration. The RuvB motors rotate together with the DNA substrate, which together with the progressing nucleotide cycle form the mechanistic basis for DNA recombination by continuous HJ branch migration. Branch migration allows RuvC to scan DNA until it finds its consensus sequence, where it cleaves and resolves cruciform DNA. This chain is Holliday junction branch migration complex subunit RuvB, found in Borreliella afzelii (strain PKo) (Borrelia afzelii).